The primary structure comprises 406 residues: GTPase Obg (406 aa).

In terms of domain architecture, Obg spans 1 to 159; it reads MRFVDEAVIT…REIRLELKVL (159 aa). A disordered region spans residues 120–143; the sequence is GGEGGLGNTHFKSSTNRAPRKCTT. The OBG-type G domain occupies 160–333; it reads ADVGLLGMPN…VVYYLMDQIE (174 aa). Residues 166-173, 191-195, 213-216, 283-286, and 314-316 each bind GTP; these read GMPNAGKS, FTTMV, DIPG, NKLD, and SGL. Residues S173 and T193 each contribute to the Mg(2+) site. Residues 381–406 are disordered; sequence ESMMDDDDDFDDDEDDGDVESIYVRD. A compositionally biased stretch (acidic residues) spans 383-399; that stretch reads MMDDDDDFDDDEDDGDV.

The protein belongs to the TRAFAC class OBG-HflX-like GTPase superfamily. OBG GTPase family. As to quaternary structure, monomer. It depends on Mg(2+) as a cofactor.

The protein resides in the cytoplasm. Functionally, an essential GTPase which binds GTP, GDP and possibly (p)ppGpp with moderate affinity, with high nucleotide exchange rates and a fairly low GTP hydrolysis rate. Plays a role in control of the cell cycle, stress response, ribosome biogenesis and in those bacteria that undergo differentiation, in morphogenesis control. The chain is GTPase Obg from Acinetobacter baumannii (strain ACICU).